Consider the following 427-residue polypeptide: Serine--tRNA ligase (427 aa).

231-233 (TAE) provides a ligand contact to L-serine. Residue 262–264 (RSE) coordinates ATP. Position 285 (E285) interacts with L-serine. 349–352 (EISS) contacts ATP. S385 lines the L-serine pocket.

It belongs to the class-II aminoacyl-tRNA synthetase family. Type-1 seryl-tRNA synthetase subfamily. In terms of assembly, homodimer. The tRNA molecule binds across the dimer.

The protein resides in the cytoplasm. The catalysed reaction is tRNA(Ser) + L-serine + ATP = L-seryl-tRNA(Ser) + AMP + diphosphate + H(+). The enzyme catalyses tRNA(Sec) + L-serine + ATP = L-seryl-tRNA(Sec) + AMP + diphosphate + H(+). The protein operates within aminoacyl-tRNA biosynthesis; selenocysteinyl-tRNA(Sec) biosynthesis; L-seryl-tRNA(Sec) from L-serine and tRNA(Sec): step 1/1. Its function is as follows. Catalyzes the attachment of serine to tRNA(Ser). Is also able to aminoacylate tRNA(Sec) with serine, to form the misacylated tRNA L-seryl-tRNA(Sec), which will be further converted into selenocysteinyl-tRNA(Sec). In Rhizobium johnstonii (strain DSM 114642 / LMG 32736 / 3841) (Rhizobium leguminosarum bv. viciae), this protein is Serine--tRNA ligase.